Here is a 268-residue protein sequence, read N- to C-terminus: tRNA pseudouridine synthase A (268 aa).

Aspartate 52 serves as the catalytic Nucleophile. Tyrosine 110 is a binding site for substrate.

The protein belongs to the tRNA pseudouridine synthase TruA family. Homodimer.

The enzyme catalyses uridine(38/39/40) in tRNA = pseudouridine(38/39/40) in tRNA. Formation of pseudouridine at positions 38, 39 and 40 in the anticodon stem and loop of transfer RNAs. This is tRNA pseudouridine synthase A from Prochlorococcus marinus (strain MIT 9515).